A 247-amino-acid polypeptide reads, in one-letter code: DNA polymerase sliding clamp (247 aa).

Belongs to the PCNA family. As to quaternary structure, homotrimer. The subunits circularize to form a toroid; DNA passes through its center. Replication factor C (RFC) is required to load the toroid on the DNA.

Its function is as follows. Sliding clamp subunit that acts as a moving platform for DNA processing. Responsible for tethering the catalytic subunit of DNA polymerase and other proteins to DNA during high-speed replication. The polypeptide is DNA polymerase sliding clamp (Methanoregula boonei (strain DSM 21154 / JCM 14090 / 6A8)).